The chain runs to 517 residues: Probable bifunctional methylthioribulose-1-phosphate dehydratase/enolase-phosphatase E1 (517 aa).

A methylthioribulose-1-phosphate dehydratase region spans residues 1-242; that stretch reads MACGGCSCEA…CIKLYQLGID (242 aa). C114 contacts substrate. Zn(2+) contacts are provided by H132 and H134. E157 functions as the Proton donor/acceptor; for methylthioribulose-1-phosphate dehydratase activity in the catalytic mechanism. Zn(2+) is bound at residue H207. Residues 278–517 are enolase-phosphatase E1; that stretch reads VVLDIEGTTT…FRTIKSFSEI (240 aa). Mg(2+) is bound by residues D281 and E283. Residues 416–417 and K450 each bind substrate; that span reads SS. Mg(2+) is bound at residue D476.

This sequence in the N-terminal section; belongs to the aldolase class II family. MtnB subfamily. It in the C-terminal section; belongs to the HAD-like hydrolase superfamily. MasA/MtnC family. Zn(2+) serves as cofactor. It depends on Mg(2+) as a cofactor.

It carries out the reaction 5-(methylsulfanyl)-D-ribulose 1-phosphate = 5-methylsulfanyl-2,3-dioxopentyl phosphate + H2O. It catalyses the reaction 5-methylsulfanyl-2,3-dioxopentyl phosphate + H2O = 1,2-dihydroxy-5-(methylsulfanyl)pent-1-en-3-one + phosphate. Its pathway is amino-acid biosynthesis; L-methionine biosynthesis via salvage pathway; L-methionine from S-methyl-5-thio-alpha-D-ribose 1-phosphate: step 2/6. The protein operates within amino-acid biosynthesis; L-methionine biosynthesis via salvage pathway; L-methionine from S-methyl-5-thio-alpha-D-ribose 1-phosphate: step 3/6. It functions in the pathway amino-acid biosynthesis; L-methionine biosynthesis via salvage pathway; L-methionine from S-methyl-5-thio-alpha-D-ribose 1-phosphate: step 4/6. The polypeptide is Probable bifunctional methylthioribulose-1-phosphate dehydratase/enolase-phosphatase E1 (Sorghum bicolor (Sorghum)).